Reading from the N-terminus, the 322-residue chain is AA9 family lytic polysaccharide monooxygenase B (322 aa).

The first 17 residues, 1-17 (MFSKSIIAASLLTAVTA), serve as a signal peptide directing secretion. H18 serves as a coordination point for Cu(2+). 2 N-linked (GlcNAc...) asparagine glycosylation sites follow: N53 and N68. A disulfide bond links C56 and C173. Residue H87 participates in Cu(2+) binding. N-linked (GlcNAc...) asparagine glycosylation is found at N121 and N133. The O2 site is built by H159 and Q168. Y170 provides a ligand contact to Cu(2+). N197 carries an N-linked (GlcNAc...) asparagine glycan.

The protein belongs to the polysaccharide monooxygenase AA9 family. Requires Cu(2+) as cofactor.

It localises to the secreted. It catalyses the reaction [(1-&gt;4)-beta-D-glucosyl]n+m + reduced acceptor + O2 = 4-dehydro-beta-D-glucosyl-[(1-&gt;4)-beta-D-glucosyl]n-1 + [(1-&gt;4)-beta-D-glucosyl]m + acceptor + H2O.. Functionally, lytic polysaccharide monooxygenase (LPMO) that depolymerizes crystalline and amorphous polysaccharides via the oxidation of scissile alpha- or beta-(1-4)-glycosidic bonds, yielding C1 and C4 oxidation products. Catalysis by LPMOs requires the reduction of the active-site copper from Cu(II) to Cu(I) by a reducing agent and H(2)O(2) or O(2) as a cosubstrate. The polypeptide is AA9 family lytic polysaccharide monooxygenase B (Botryotinia fuckeliana (strain B05.10) (Noble rot fungus)).